The sequence spans 370 residues: tRNA-specific 2-thiouridylase MnmA (370 aa).

ATP is bound by residues 9 to 16 (GMSGGVDS) and M35. The segment at 95–97 (NPD) is interaction with target base in tRNA. C100 serves as the catalytic Nucleophile. Residues C100 and C196 are joined by a disulfide bond. G124 provides a ligand contact to ATP. Positions 146–148 (KDQ) are interaction with tRNA. C196 serves as the catalytic Cysteine persulfide intermediate. The interaction with tRNA stretch occupies residues 308-309 (RY).

It belongs to the MnmA/TRMU family.

Its subcellular location is the cytoplasm. The enzyme catalyses S-sulfanyl-L-cysteinyl-[protein] + uridine(34) in tRNA + AH2 + ATP = 2-thiouridine(34) in tRNA + L-cysteinyl-[protein] + A + AMP + diphosphate + H(+). Its function is as follows. Catalyzes the 2-thiolation of uridine at the wobble position (U34) of tRNA, leading to the formation of s(2)U34. The protein is tRNA-specific 2-thiouridylase MnmA of Ralstonia pickettii (strain 12J).